We begin with the raw amino-acid sequence, 591 residues long: Complement component C8 beta chain (591 aa).

An N-terminal signal peptide occupies residues 1–32; sequence MKNSRTWAWRAPVELFLLCAALGCLSLPGSRG. The propeptide occupies 33–54; it reads ERPHSFGSNAVNKSFAKSRQMR. Residues 64 to 117 enclose the TSP type-1 1 domain; it reads DCELSSWSSWTTCDPCQKKRYRYAYLLQPSQFHGEPCNFSDKEVEDCVTNRPCG. 7 disulfide bridges follow: Cys-65/Cys-100, Cys-76/Cys-110, Cys-79/Cys-116, Cys-122/Cys-133, Cys-127/Cys-146, Cys-140/Cys-155, and Cys-162/Cys-200. Residues Trp-70 and Trp-73 are each glycosylated (C-linked (Man) tryptophan). An N-linked (GlcNAc...) asparagine glycan is attached at Asn-101. One can recognise an LDL-receptor class A domain in the interval 120–157; sequence VRCEGFVCAQTGRCVNRRLLCNGDNDCGDQSDEANCRR. Ca(2+) is bound by residues Leu-138, Asn-141, Asp-143, Asp-145, Asp-151, and Glu-152. Residues 158-504 form the MACPF domain; the sequence is IYKKCQHEMD…EFQKEVSSCH (347 aa). Asn-243 carries an N-linked (GlcNAc...) asparagine glycan. Transmembrane regions (beta stranded) follow at residues 252 to 259, 262 to 269, 379 to 386, and 392 to 399; these read SGFSFGFK, GIFELGIS, AKNDFKIG, and VYVSLGVS. The cysteines at positions 378 and 403 are disulfide-linked. Thr-418 is modified (phosphothreonine). Cystine bridges form between Cys-503–Cys-550, Cys-505–Cys-521, Cys-508–Cys-523, and Cys-525–Cys-534. Residues 505–535 form the EGF-like domain; it reads CAPCQGNGVPVLKGSRCDCICPVGSQGLACE. The TSP type-1 2 domain maps to 545 to 591; that stretch reads DGKWNCWSNWSSCSGRRKTRQRQCNNPPPQNGGSPCSGPASETLDCS. Residues Trp-551 and Trp-554 are each glycosylated (C-linked (Man) tryptophan). A disulfide bond links Cys-557 and Cys-590. The disordered stretch occupies residues 568–591; it reads CNNPPPQNGGSPCSGPASETLDCS.

It belongs to the complement C6/C7/C8/C9 family. Heterotrimer of 3 chains: alpha (C8A), beta (C8B) and gamma (C8G); the alpha and gamma chains are disulfide bonded. Component of the membrane attack complex (MAC), composed of complement C5b, C6, C7, C8A, C8B, C8G and multiple copies of the pore-forming subunit C9. Post-translationally, N-glycosylated; contains one or two bound glycans. Not O-glycosylated.

Its subcellular location is the secreted. The protein resides in the target cell membrane. Membrane attack complex (MAC) assembly is inhibited by CD59, thereby protecting self-cells from damage during complement activation. CD59 acts by binding to the beta-haipins of C8 (C8A and C8B), forming an intermolecular beta-sheet that prevents incorporation of the multiple copies of C9 required for complete formation of the osmolytic pore. MAC assembly is also inhibited by clusterin (CLU) chaperones that inhibit polymerization of C9. Its function is as follows. Component of the membrane attack complex (MAC), a multiprotein complex activated by the complement cascade, which inserts into a target cell membrane and forms a pore, leading to target cell membrane rupture and cell lysis. The MAC is initiated by proteolytic cleavage of C5 into complement C5b in response to the classical, alternative, lectin and GZMK complement pathways. The complement pathways consist in a cascade of proteins that leads to phagocytosis and breakdown of pathogens and signaling that strengthens the adaptive immune system. C8B, together with C8A and C8G, inserts into the target membrane, but does not form pores by itself. During MAC assembly, associates with C5b, C6 and C7 to form the C5b8 intermediate complex that inserts into the target membrane and traverses the bilayer increasing membrane rigidity. The protein is Complement component C8 beta chain of Homo sapiens (Human).